The following is a 573-amino-acid chain: Protein translocase subunit SecD (573 aa).

The chain crosses the membrane as a helical span at residues 13 to 33 (YLSVFLVMLIGIYLLVFFTGD). The segment at 127 to 200 (AQPAAEEPQP…PPAEAPATDP (74 aa)) is disordered. 2 stretches are compositionally biased toward pro residues: residues 135 to 154 (QPAP…PPPA) and 161 to 194 (SPQP…PPAE). 5 consecutive transmembrane segments (helical) span residues 385–405 (AGMI…LLYY), 410–430 (LLTA…LVLL), 441–461 (AGIA…VVFF), 489–509 (IVSG…LAIG), and 514–534 (FAFT…LVTW).

This sequence belongs to the SecD/SecF family. SecD subfamily. In terms of assembly, forms a complex with SecF. Part of the essential Sec protein translocation apparatus which comprises SecA, SecYEG and auxiliary proteins SecDF. Other proteins may also be involved.

The protein resides in the cell membrane. Part of the Sec protein translocase complex. Interacts with the SecYEG preprotein conducting channel. SecDF uses the proton motive force (PMF) to complete protein translocation after the ATP-dependent function of SecA. In Mycobacterium tuberculosis (strain CDC 1551 / Oshkosh), this protein is Protein translocase subunit SecD.